The following is a 735-amino-acid chain: ATP-dependent RNA helicase dbp4 (735 aa).

A disordered region spans residues M1 to I24. The span at R8–E19 shows a compositional bias: basic and acidic residues. The Q motif signature appears at D39–K67. The Helicase ATP-binding domain occupies I70–I244. ATP is bound at residue A83–T90. The DEAD box signature appears at D192–D195. Residues K270–L424 form the Helicase C-terminal domain. The disordered stretch occupies residues G483–N513. Phosphoserine occurs at positions 500, 503, 504, and 545. The tract at residues K652 to I712 is disordered. Residues E692–G711 show a composition bias toward basic and acidic residues.

This sequence belongs to the DEAD box helicase family. DDX10/DBP4 subfamily. In terms of assembly, interacts with the U3 and U14 snoRNAs. Associates with pre-ribosomal complexes.

It localises to the nucleus. The protein resides in the nucleolus. It carries out the reaction ATP + H2O = ADP + phosphate + H(+). In terms of biological role, ATP-dependent RNA helicase required for ribosome biogenesis. Involved in the release of U14 snoRNA in pre-ribosomal complexes. Required for pre-rRNA cleavage at site A2. The chain is ATP-dependent RNA helicase dbp4 (dbp4) from Schizosaccharomyces pombe (strain 972 / ATCC 24843) (Fission yeast).